The sequence spans 401 residues: Imidazolonepropionase (401 aa).

Residues His66 and His68 each coordinate Fe(3+). 2 residues coordinate Zn(2+): His66 and His68. 4-imidazolone-5-propanoate-binding residues include Arg75, Tyr138, and His171. Position 138 (Tyr138) interacts with N-formimidoyl-L-glutamate. Position 236 (His236) interacts with Fe(3+). His236 serves as a coordination point for Zn(2+). Position 239 (Gln239) interacts with 4-imidazolone-5-propanoate. Residue Asp311 coordinates Fe(3+). Asp311 serves as a coordination point for Zn(2+). N-formimidoyl-L-glutamate is bound by residues Asn313 and Gly315. Thr316 serves as a coordination point for 4-imidazolone-5-propanoate.

The protein belongs to the metallo-dependent hydrolases superfamily. HutI family. Requires Zn(2+) as cofactor. Fe(3+) serves as cofactor.

It is found in the cytoplasm. It carries out the reaction 4-imidazolone-5-propanoate + H2O = N-formimidoyl-L-glutamate. It functions in the pathway amino-acid degradation; L-histidine degradation into L-glutamate; N-formimidoyl-L-glutamate from L-histidine: step 3/3. Functionally, catalyzes the hydrolytic cleavage of the carbon-nitrogen bond in imidazolone-5-propanoate to yield N-formimidoyl-L-glutamate. It is the third step in the universal histidine degradation pathway. The polypeptide is Imidazolonepropionase (Pseudomonas fluorescens (strain Pf0-1)).